A 397-amino-acid polypeptide reads, in one-letter code: Homoserine O-acetyltransferase (397 aa).

The 311-residue stretch at 58-368 (NAVLVLHALT…EAKWGHDAFL (311 aa)) folds into the AB hydrolase-1 domain. Catalysis depends on S164, which acts as the Nucleophile. R233 contacts substrate. Active-site residues include D331 and H364. D365 is a substrate binding site.

Belongs to the AB hydrolase superfamily. MetX family. Homodimer.

It is found in the cytoplasm. The catalysed reaction is L-homoserine + acetyl-CoA = O-acetyl-L-homoserine + CoA. Its pathway is amino-acid biosynthesis; L-methionine biosynthesis via de novo pathway; O-acetyl-L-homoserine from L-homoserine: step 1/1. Its function is as follows. Transfers an acetyl group from acetyl-CoA to L-homoserine, forming acetyl-L-homoserine. The protein is Homoserine O-acetyltransferase of Solidesulfovibrio magneticus (strain ATCC 700980 / DSM 13731 / RS-1) (Desulfovibrio magneticus).